Consider the following 27-residue polypeptide: AnmTX Sco 9a-1 (27 aa).

Proline 6 is modified (hydroxyproline). 2 disulfide bridges follow: cysteine 7/cysteine 18 and cysteine 10/cysteine 25.

Has analgesic and anti-inflammatory activity in vivo. At a dose of 0.1 and 1 mg/kg, exhibits anti-inflammatory activity by reducing the volume of edema during 24 h better than the nonsteroidal anti-inflammatory drug, Diclofenac, at dose of 1 mg/kg in a mouse model of acute local lambda-carrageenan-induced inflammation. At a dose of 1 mg/kg, reduces the content of tumor necrosis factor-alpha (TNF-alpha). Demonstrates a significant analgesic effect on acute pain sensitivity in the carrageenan-induced thermal hyperalgesia model at doses of 0.1 and 1 mg/kg. Not toxic in mice, however stimulates exploratory motivation and active search behavior, and demonstrates an anti-anxiety effect. Does not exhibit any effect on currents of rat acid-sensing ion channels ASIC1a or ASIC3. The chain is AnmTX Sco 9a-1 from Stomphia coccinea (Spotted swimming anemone).